The primary structure comprises 227 residues: 2,3-bisphosphoglycerate-dependent phosphoglycerate mutase (227 aa).

Residues 7 to 14, 20 to 21, arginine 59, 86 to 89, lysine 97, 113 to 114, and 182 to 183 each bind substrate; these read RHGFSEWN, TG, ERHY, RR, and GN. Histidine 8 (tele-phosphohistidine intermediate) is an active-site residue. Glutamate 86 (proton donor/acceptor) is an active-site residue.

It belongs to the phosphoglycerate mutase family. BPG-dependent PGAM subfamily. As to quaternary structure, homodimer.

It carries out the reaction (2R)-2-phosphoglycerate = (2R)-3-phosphoglycerate. Its pathway is carbohydrate degradation; glycolysis; pyruvate from D-glyceraldehyde 3-phosphate: step 3/5. Catalyzes the interconversion of 2-phosphoglycerate and 3-phosphoglycerate. This chain is 2,3-bisphosphoglycerate-dependent phosphoglycerate mutase, found in Pasteurella multocida (strain Pm70).